The primary structure comprises 198 residues: Na(+)-translocating NADH-quinone reductase subunit E (198 aa).

Transmembrane regions (helical) follow at residues 11–31, 40–60, 77–97, 110–130, 140–160, and 176–196; these read SIFIENLALSFFLGMCTFLAV, GLGIAVVVVQAIAVPANNLVF, FLGFITYIGVIAALVQILEMF, GIFLPLITVNCAIFGGVSFMV, VVYGVGSGISWALAIVLMAAI, and LGITFITAGLMALGFMSFSGI.

Belongs to the NqrDE/RnfAE family. In terms of assembly, composed of six subunits; NqrA, NqrB, NqrC, NqrD, NqrE and NqrF.

It localises to the cell inner membrane. It catalyses the reaction a ubiquinone + n Na(+)(in) + NADH + H(+) = a ubiquinol + n Na(+)(out) + NAD(+). Its function is as follows. NQR complex catalyzes the reduction of ubiquinone-1 to ubiquinol by two successive reactions, coupled with the transport of Na(+) ions from the cytoplasm to the periplasm. NqrA to NqrE are probably involved in the second step, the conversion of ubisemiquinone to ubiquinol. The sequence is that of Na(+)-translocating NADH-quinone reductase subunit E from Tolumonas auensis (strain DSM 9187 / NBRC 110442 / TA 4).